We begin with the raw amino-acid sequence, 127 residues long: MFRTMMRAKLHRATVTEANLNYVGSITIDEDLMDAVEIVENEKVQVVNNNNGERLETYVIKGERGSGVICLNGAAARLVQPGDKVIIICYGLVSAEEVYKQIPKIAVLDDRNQIIEMLSAEKAGTEV.

Serine 25 (schiff-base intermediate with substrate; via pyruvic acid) is an active-site residue. The residue at position 25 (serine 25) is a Pyruvic acid (Ser). Residue threonine 57 coordinates substrate. Catalysis depends on tyrosine 58, which acts as the Proton donor. 73 to 75 (GAA) is a binding site for substrate.

It belongs to the PanD family. In terms of assembly, heterooctamer of four alpha and four beta subunits. Pyruvate is required as a cofactor. In terms of processing, is synthesized initially as an inactive proenzyme, which is activated by self-cleavage at a specific serine bond to produce a beta-subunit with a hydroxyl group at its C-terminus and an alpha-subunit with a pyruvoyl group at its N-terminus.

It localises to the cytoplasm. It catalyses the reaction L-aspartate + H(+) = beta-alanine + CO2. Its pathway is cofactor biosynthesis; (R)-pantothenate biosynthesis; beta-alanine from L-aspartate: step 1/1. In terms of biological role, catalyzes the pyruvoyl-dependent decarboxylation of aspartate to produce beta-alanine. This Bacillus cytotoxicus (strain DSM 22905 / CIP 110041 / 391-98 / NVH 391-98) protein is Aspartate 1-decarboxylase.